Consider the following 565-residue polypeptide: MTQSQGQDPRLDTSRTIRAPHGTTLRAKSWLTEAPLRMLMNNLDPDVAEHPHALVVYGGIGRAARNWACFDKIVEVLERLEDDQTLLVQSGKPVGVFPTHKNAPRVLIANSNLVPHWANWEHFNELDKQGLMMYGQMTAGSWIYIGSQGIVQGTYETFVAVAKKHFAGEAKGRWVLTGGLGGMGGAQPLAATMAGFSMIAVECDESRIDYRLRTGYVDKKATTLEEALAIVKESDTPVSVGLLGNAADVFAELVERNITPDVVTDQTSAHDPLNGYLPQGWSMAYAAEMRQQDESTVVKAAKQSMAVQVKAMLELQSRGAATLDYGNNIRQMALEEGVENAFDFPGFVPAYIRPLFCEGIGPFRWAALSGDPEDIYKTDQKVKELIPDNPHLHNWLDMARERIQFQGLPARICWVGLKDRERLGQAFNEMVKNGELKAPIVIGRDHLDSGSVASPNRETEGMMDGSDAVSDWPLLNALLNTAGGATWVSLHHGGGVGMGFSQHSGMVICCDGTEDASARIARVLHNDPATGVMRHADAGYDIAKQCAAQQGLDLPMLNEELSKLK.

NAD(+) is bound by residues 58 to 59, Gln-136, 182 to 184, Glu-202, Arg-207, 245 to 246, 266 to 270, 276 to 277, and Tyr-325; these read GG, GMG, NA, QTSAH, and YL. Cys-413 is a catalytic residue. Gly-495 lines the NAD(+) pocket.

This sequence belongs to the urocanase family. NAD(+) is required as a cofactor.

Its subcellular location is the cytoplasm. The catalysed reaction is 4-imidazolone-5-propanoate = trans-urocanate + H2O. The protein operates within amino-acid degradation; L-histidine degradation into L-glutamate; N-formimidoyl-L-glutamate from L-histidine: step 2/3. Its function is as follows. Catalyzes the conversion of urocanate to 4-imidazolone-5-propionate. The protein is Urocanate hydratase of Vibrio vulnificus (strain CMCP6).